Reading from the N-terminus, the 243-residue chain is Probable transcriptional regulatory protein Smal_3128 (243 aa).

It belongs to the TACO1 family.

It is found in the cytoplasm. This Stenotrophomonas maltophilia (strain R551-3) protein is Probable transcriptional regulatory protein Smal_3128.